Here is a 443-residue protein sequence, read N- to C-terminus: Carboxypeptidase M (443 aa).

An N-terminal signal peptide occupies residues 1–17; sequence MDRARLWLGLLLPVVAA. Residues 21-311 form the Peptidase M14 domain; the sequence is RYHHQEGMEA…ASLIEYIKQV (291 aa). Residue asparagine 38 is glycosylated (N-linked (GlcNAc...) asparagine). Histidine 83 and glutamate 86 together coordinate Zn(2+). 3 disulfide bridges follow: cysteine 138-cysteine 285, cysteine 242-cysteine 284, and cysteine 341-cysteine 410. An N-linked (GlcNAc...) asparagine glycan is attached at asparagine 164. Position 190 (histidine 190) interacts with Zn(2+). Glutamate 281 (proton donor/acceptor) is an active-site residue. N-linked (GlcNAc...) asparagine glycosylation is present at asparagine 363. Serine 423 is lipidated: GPI-anchor amidated serine. Residues 424–443 constitute a propeptide, removed in mature form; the sequence is AATKPSLGVFFMTLLYVFFK.

It belongs to the peptidase M14 family. Zn(2+) serves as cofactor.

The protein resides in the cell membrane. The enzyme catalyses Cleavage of C-terminal arginine or lysine residues from polypeptides.. Specifically removes C-terminal basic residues (Arg or Lys) from peptides and proteins. It is believed to play important roles in the control of peptide hormone and growth factor activity at the cell surface, and in the membrane-localized degradation of extracellular proteins. The polypeptide is Carboxypeptidase M (Cpm) (Mus musculus (Mouse)).